Consider the following 143-residue polypeptide: Nucleoside diphosphate kinase (143 aa).

ATP-binding residues include Lys11, Phe59, Arg87, Thr93, Arg104, and Asn114. Catalysis depends on His117, which acts as the Pros-phosphohistidine intermediate.

Belongs to the NDK family. In terms of assembly, homotetramer. The cofactor is Mg(2+).

The protein resides in the cytoplasm. It catalyses the reaction a 2'-deoxyribonucleoside 5'-diphosphate + ATP = a 2'-deoxyribonucleoside 5'-triphosphate + ADP. It carries out the reaction a ribonucleoside 5'-diphosphate + ATP = a ribonucleoside 5'-triphosphate + ADP. Its function is as follows. Major role in the synthesis of nucleoside triphosphates other than ATP. The ATP gamma phosphate is transferred to the NDP beta phosphate via a ping-pong mechanism, using a phosphorylated active-site intermediate. The protein is Nucleoside diphosphate kinase of Idiomarina loihiensis (strain ATCC BAA-735 / DSM 15497 / L2-TR).